The chain runs to 159 residues: SsrA-binding protein (159 aa).

It belongs to the SmpB family.

The protein localises to the cytoplasm. In terms of biological role, required for rescue of stalled ribosomes mediated by trans-translation. Binds to transfer-messenger RNA (tmRNA), required for stable association of tmRNA with ribosomes. tmRNA and SmpB together mimic tRNA shape, replacing the anticodon stem-loop with SmpB. tmRNA is encoded by the ssrA gene; the 2 termini fold to resemble tRNA(Ala) and it encodes a 'tag peptide', a short internal open reading frame. During trans-translation Ala-aminoacylated tmRNA acts like a tRNA, entering the A-site of stalled ribosomes, displacing the stalled mRNA. The ribosome then switches to translate the ORF on the tmRNA; the nascent peptide is terminated with the 'tag peptide' encoded by the tmRNA and targeted for degradation. The ribosome is freed to recommence translation, which seems to be the essential function of trans-translation. The polypeptide is SsrA-binding protein (Saccharophagus degradans (strain 2-40 / ATCC 43961 / DSM 17024)).